A 284-amino-acid chain; its full sequence is WUSCHEL-related homeobox 10 (284 aa).

The interval 1–43 (MDRTATASWEVMSRRGEQQQQLMMQAPASHNGGSGGGEPARSR) is disordered. A DNA-binding region (homeobox; WUS-type) is located at residues 39 to 103 (PARSRWAPKP…NRRSRSRRRA (65 aa)).

Belongs to the WUS homeobox family.

It is found in the nucleus. Its function is as follows. Transcription factor which may be involved in developmental processes. The sequence is that of WUSCHEL-related homeobox 10 (WOX10) from Oryza sativa subsp. japonica (Rice).